The chain runs to 746 residues: F-box only protein 30 (746 aa).

The TRAF-type zinc finger occupies 49–110 (EHRLLCPFER…SYSDRKSYES (62 aa)). Disordered regions lie at residues 222–241 (MDEENNKESFQDKNLKDQDH) and 247–266 (IGAVGGVDYSGTSQNAQAEQ). A compositionally biased stretch (basic and acidic residues) spans 225 to 241 (ENNKESFQDKNLKDQDH). Over residues 256–266 (SGTSQNAQAEQ) the composition is skewed to polar residues. Phosphoserine is present on serine 383. Positions 611–659 (SDHLSSLPFEVLQHIAGFLDGFSLCQLACVSRLMRDVCGSLLQSRGMVI) constitute an F-box domain.

Part of a SCF (SKP1-cullin-F-box) protein ligase complex. Interacts with SKP1, CUL1 and RBX1/ROC1. Auto-ubiquitinated. Post-translationally, may be neddylated. Neddylation may be required for E3 ligase activity, since it was observed only after purification with o-phenanthroline.

It participates in protein modification; protein ubiquitination. Substrate-recognition component of the SCF (SKP1-CUL1-F-box protein)-type E3 ubiquitin ligase complex. Required for muscle atrophy following denervation. The sequence is that of F-box only protein 30 (Fbxo30) from Mus musculus (Mouse).